A 265-amino-acid chain; its full sequence is U6 snRNA phosphodiesterase 1 (265 aa).

The tract at residues 1–72 is disordered; sequence MSAAPLVGYS…DSTKHGGRVR (72 aa). Basic and acidic residues predominate over residues 20 to 31; the sequence is DGMRTRPGDGSH. The active-site Proton acceptor is the His-120. 120-122 provides a ligand contact to AMP; it reads HLS. UMP-binding positions include Gln-164, Tyr-202, and 206–210; that span reads SFHLS. AMP-binding positions include Tyr-202 and 204–210; that span reads DPSFHLS. His-208 (proton donor) is an active-site residue.

The protein belongs to the 2H phosphoesterase superfamily. USB1 family. In terms of assembly, interacts with PLRG1, CDC5L and PRPF19.

Its subcellular location is the nucleus. The catalysed reaction is a 3'-end uridylyl-uridine-RNA = a 3'-end 2',3'-cyclophospho-uridine-RNA + uridine. It catalyses the reaction a 3'-end uridylyl-adenosine-RNA = a 3'-end 2',3'-cyclophospho-uridine-RNA + adenosine. Its activity is regulated as follows. 3'-5' RNA exonuclease activity is inhibited by a 3' phosphate terminated RNA. Its function is as follows. 3'-5' RNA exonuclease that trims the 3' end of oligo(U) and oligo(A) tracts of the pre-U6 small nuclear RNA (snRNA) molecule, leading to the formation of a mature U6 snRNA 3' end-terminated with a 2',3'-cyclic phosphate. Participates in the U6 snRNA 3' end processing that prevents U6 snRNA degradation. In addition also removes uridines from the 3' end of U6atac snRNA and possibly the vault RNA VTRNA1-1. This Homo sapiens (Human) protein is U6 snRNA phosphodiesterase 1.